The primary structure comprises 224 residues: Octanoyltransferase (224 aa).

The 196-residue stretch at 29-224 (EATPDALWIC…GQKLATYLAP (196 aa)) folds into the BPL/LPL catalytic domain. Substrate contacts are provided by residues 68-75 (RGGQVTFH), 157-159 (ALG), and 170-172 (GVA). The active-site Acyl-thioester intermediate is the Cys188.

Belongs to the LipB family.

Its subcellular location is the cytoplasm. It catalyses the reaction octanoyl-[ACP] + L-lysyl-[protein] = N(6)-octanoyl-L-lysyl-[protein] + holo-[ACP] + H(+). The protein operates within protein modification; protein lipoylation via endogenous pathway; protein N(6)-(lipoyl)lysine from octanoyl-[acyl-carrier-protein]: step 1/2. Its function is as follows. Catalyzes the transfer of endogenously produced octanoic acid from octanoyl-acyl-carrier-protein onto the lipoyl domains of lipoate-dependent enzymes. Lipoyl-ACP can also act as a substrate although octanoyl-ACP is likely to be the physiological substrate. The protein is Octanoyltransferase of Polaromonas naphthalenivorans (strain CJ2).